A 368-amino-acid chain; its full sequence is MWIKELELKHYRNYDHLLASFSSGLNVFIGNNAQGKTNFLEAIYFLSLTRSHRTRADKELIHFDHSTVSLTGKIQRISGTVDLEINLSDKGRVTKINALKQAKLSDYIGTMMVVLFAPEDLQLVKGAPSLRRKFIDIDLGQIKPVYLSELSHYNHVLKQRNSYLKSAQQIDAAFLAVLDEQLASYGARVMEHRIDFINALEKEANTHHQAISNGLESLSLSYQSSVVFDKKTNIYQQFLYQLEKNHQKDFFRKNTSVGPHRDELAFYINGMNANFASQGQHRSLILSLKMAEVSLMKALTGDNPILLLDDVMSELDNTRQTKLLETVIKENVQTFITTTSLDHLSQLPEGIRIFHVTKGTVQIDSDIH.

30–37 (GNNAQGKT) contributes to the ATP binding site.

This sequence belongs to the RecF family.

It localises to the cytoplasm. Functionally, the RecF protein is involved in DNA metabolism; it is required for DNA replication and normal SOS inducibility. RecF binds preferentially to single-stranded, linear DNA. It also seems to bind ATP. The polypeptide is DNA replication and repair protein RecF (Streptococcus pyogenes serotype M12 (strain MGAS9429)).